Consider the following 139-residue polypeptide: Actin-depolymerizing factor 2 (139 aa).

One can recognise an ADF-H domain in the interval 7 to 139 (GLAVSDECKV…SLDIVKSRTN (133 aa)).

The protein belongs to the actin-binding proteins ADF family. Expressed in pollen.

Actin-depolymerizing protein. Severs actin filaments (F-actin) and binds to actin monomers. In Zea mays (Maize), this protein is Actin-depolymerizing factor 2 (ADF2).